Reading from the N-terminus, the 332-residue chain is DNA-directed RNA polymerase subunit alpha (332 aa).

An alpha N-terminal domain (alpha-NTD) region spans residues 1–227; sequence MKKFAETPFL…VMYSQMSVFN (227 aa). An alpha C-terminal domain (alpha-CTD) region spans residues 248-332; it reads KELVIRIDDL…LRRKLEQLKA (85 aa).

The protein belongs to the RNA polymerase alpha chain family. As to quaternary structure, homodimer. The RNAP catalytic core consists of 2 alpha, 1 beta, 1 beta' and 1 omega subunit. When a sigma factor is associated with the core the holoenzyme is formed, which can initiate transcription.

It carries out the reaction RNA(n) + a ribonucleoside 5'-triphosphate = RNA(n+1) + diphosphate. In terms of biological role, DNA-dependent RNA polymerase catalyzes the transcription of DNA into RNA using the four ribonucleoside triphosphates as substrates. This chain is DNA-directed RNA polymerase subunit alpha, found in Aliarcobacter butzleri (strain RM4018) (Arcobacter butzleri).